A 315-amino-acid chain; its full sequence is Homoserine kinase (315 aa).

Residue 97 to 107 (PPARGLGSSAT) coordinates ATP.

Belongs to the GHMP kinase family. Homoserine kinase subfamily.

It is found in the cytoplasm. The catalysed reaction is L-homoserine + ATP = O-phospho-L-homoserine + ADP + H(+). It functions in the pathway amino-acid biosynthesis; L-threonine biosynthesis; L-threonine from L-aspartate: step 4/5. In terms of biological role, catalyzes the ATP-dependent phosphorylation of L-homoserine to L-homoserine phosphate. This chain is Homoserine kinase, found in Synechococcus sp. (strain CC9605).